An 89-amino-acid chain; its full sequence is Large ribosomal subunit protein uL30 (89 aa).

The protein belongs to the universal ribosomal protein uL30 family. In terms of assembly, part of the 50S ribosomal subunit.

The polypeptide is Large ribosomal subunit protein uL30 (Myxococcus xanthus (strain DK1622)).